We begin with the raw amino-acid sequence, 775 residues long: BLOC-2 complex member HPS6 (775 aa).

In terms of assembly, component of the biogenesis of lysosome-related organelles complex-2 (or BLOC2) composed of HPS3, HPS5 and HPS6. Interacts with HPS5 and HPS3. Interacts with biogenesis of lysosome-related organelles complex-1 (BLOC1). Interacts with AP-3 complex. Interacts with MNAT1. Interacts with DCTN1 and dynein intermediate chain. As to expression, ubiquitous.

Its subcellular location is the microsome membrane. The protein resides in the cytoplasm. The protein localises to the cytosol. It is found in the early endosome membrane. It localises to the lysosome membrane. In terms of biological role, may regulate the synthesis and function of lysosomes and of highly specialized organelles, such as melanosomes and platelet dense granules. Acts as a cargo adapter for the dynein-dynactin motor complex to mediate the transport of lysosomes from the cell periphery to the perinuclear region. Facilitates retrograde lysosomal trafficking by linking the motor complex to lysosomes, and perinuclear positioning of lysosomes is crucial for the delivery of endocytic cargos to lysosomes, for lysosome maturation and functioning. The polypeptide is BLOC-2 complex member HPS6 (HPS6) (Homo sapiens (Human)).